Here is a 363-residue protein sequence, read N- to C-terminus: Probable aminomethyltransferase (363 aa).

The protein belongs to the GcvT family. In terms of assembly, the glycine cleavage system is composed of four proteins: P, T, L and H.

The catalysed reaction is N(6)-[(R)-S(8)-aminomethyldihydrolipoyl]-L-lysyl-[protein] + (6S)-5,6,7,8-tetrahydrofolate = N(6)-[(R)-dihydrolipoyl]-L-lysyl-[protein] + (6R)-5,10-methylene-5,6,7,8-tetrahydrofolate + NH4(+). Functionally, the glycine cleavage system catalyzes the degradation of glycine. This Halobacterium salinarum (strain ATCC 29341 / DSM 671 / R1) protein is Probable aminomethyltransferase.